The sequence spans 65 residues: Large ribosomal subunit protein bL35 (65 aa).

The tract at residues 20-42 is disordered; the sequence is GKVRRHHANASHIMTTKTTKRKR.

The protein belongs to the bacterial ribosomal protein bL35 family.

This chain is Large ribosomal subunit protein bL35, found in Syntrophus aciditrophicus (strain SB).